The sequence spans 343 residues: tRNA N6-adenosine threonylcarbamoyltransferase (343 aa).

Residues His-116 and His-120 each coordinate Fe cation. Substrate contacts are provided by residues 139-143 (TVSGG), Asp-172, Gly-185, Asp-189, and Asn-280. Fe cation is bound at residue Asp-308.

The protein belongs to the KAE1 / TsaD family. Fe(2+) serves as cofactor.

The protein resides in the cytoplasm. The catalysed reaction is L-threonylcarbamoyladenylate + adenosine(37) in tRNA = N(6)-L-threonylcarbamoyladenosine(37) in tRNA + AMP + H(+). Functionally, required for the formation of a threonylcarbamoyl group on adenosine at position 37 (t(6)A37) in tRNAs that read codons beginning with adenine. Is involved in the transfer of the threonylcarbamoyl moiety of threonylcarbamoyl-AMP (TC-AMP) to the N6 group of A37, together with TsaE and TsaB. TsaD likely plays a direct catalytic role in this reaction. This is tRNA N6-adenosine threonylcarbamoyltransferase from Cytophaga hutchinsonii (strain ATCC 33406 / DSM 1761 / CIP 103989 / NBRC 15051 / NCIMB 9469 / D465).